The following is a 271-amino-acid chain: MATYFVGDIQGCLDELLLLLERVEFNREKDQLWLTGDLVARGPKSLETLRFVKSLGNAAITILGNHDLHLLAVSQGISRVKEKDKTAPIFTAPDSEDLLTWLRHQPLLAVHSEYDIVMTHAGISPQWDMPTAIECAHEVESVLLSDKWVWLLENMYENHPDTWDVTLSGIERYRYIINAFTRMRFCHLDGRLDMECKLPPQDINNDELVPWFELENRLPLSHKVIFGHWAALMGHEGNNVIALDTGCVWGEYMTMYRIDDGKYFTQKAIEQ.

It belongs to the Ap4A hydrolase family.

The enzyme catalyses P(1),P(4)-bis(5'-adenosyl) tetraphosphate + H2O = 2 ADP + 2 H(+). Functionally, hydrolyzes diadenosine 5',5'''-P1,P4-tetraphosphate to yield ADP. This is Bis(5'-nucleosyl)-tetraphosphatase, symmetrical from Aliivibrio fischeri (strain MJ11) (Vibrio fischeri).